The chain runs to 180 residues: Large ribosomal subunit protein uL6 (180 aa).

Belongs to the universal ribosomal protein uL6 family. In terms of assembly, part of the 50S ribosomal subunit.

Functionally, this protein binds to the 23S rRNA, and is important in its secondary structure. It is located near the subunit interface in the base of the L7/L12 stalk, and near the tRNA binding site of the peptidyltransferase center. The sequence is that of Large ribosomal subunit protein uL6 from Thermus thermophilus (strain ATCC BAA-163 / DSM 7039 / HB27).